Consider the following 394-residue polypeptide: A-type flagellin (394 aa).

The protein belongs to the bacterial flagellin family. Post-translationally, phosphorylated on tyrosine residue(s). In terms of processing, flagellin from strain 5939 but not from strain 170018 is glycosylated.

The protein resides in the secreted. It is found in the bacterial flagellum. Its function is as follows. Flagellin is the subunit protein which polymerizes to form the filaments of bacterial flagella. The sequence is that of A-type flagellin (fliC) from Pseudomonas aeruginosa.